Consider the following 830-residue polypeptide: V-type proton ATPase 116 kDa subunit a 3 (830 aa).

Over 1–385 (MGSMFRSEEV…DAYGVGRYQE (385 aa)) the chain is Cytoplasmic. Residues 139–158 (QLAAAHTDGASERTPLLQAP) are disordered. Residues 386–404 (VNPAPYTIITFPFLFAVMF) form a helical membrane-spanning segment. The Vacuolar portion of the chain corresponds to 405–406 (GD). The helical transmembrane segment at 407–423 (VGHGLLMFLFALAMVLA) threads the bilayer. Topologically, residues 424-438 (ENRPAVKAAQNEIWQ) are cytoplasmic. A helical membrane pass occupies residues 439-468 (TFFRGRYLLLLMGLFSIYTGFIYNECFSRA). Over 469 to 532 (TSIFPSGWSV…AANHLSFLNS (64 aa)) the chain is Vacuolar. A helical transmembrane segment spans residues 533–552 (FKMKMSVILGVVHMAFGVVL). Residues 553–570 (GVFNHVHFGQRHRLLLET) are Cytoplasmic-facing. Residues 571 to 591 (LPELTFLLGLFGYLVFLVIYK) form a helical membrane-spanning segment. At 592–635 (WLCVWAARAASAPSILIHFINMFLFSHSPSNRLLYPRQEVVQAT) the chain is on the vacuolar side. The chain crosses the membrane as a helical span at residues 636–655 (LVVLALAMVPILLLGTPLHL). At 656-720 (LHRHRRRLRR…EVLMHQAIHT (65 aa)) the chain is on the cytoplasmic side. Positions 681–701 (LPDASVNGWSSDEEKAGGLDD) are disordered. Residues 721 to 745 (IEFCLGCVSNTASYLRLWALSLAHA) form a helical membrane-spanning segment. At 746–766 (QLSEVLWAMVMRIGLGLGREV) the chain is on the vacuolar side. Residues 767-807 (GVAAVVLVPIFAAFAVMTVAILLVMEGLSAFLHALRLHWVE) form a helical membrane-spanning segment. The Cytoplasmic portion of the chain corresponds to 808–830 (FQNKFYSGTGYKLSPFTFAATDD).

The protein belongs to the V-ATPase 116 kDa subunit family. In terms of assembly, V-ATPase is a heteromultimeric enzyme made up of two complexes: the ATP-hydrolytic V1 complex and the proton translocation V0 complex. The V1 complex consists of three catalytic AB heterodimers that form a heterohexamer, three peripheral stalks each consisting of EG heterodimers, one central rotor including subunits D and F, and the regulatory subunits C and H. The proton translocation complex V0 consists of the proton transport subunit a, a ring of proteolipid subunits c9c'', rotary subunit d, subunits e and f, and the accessory subunits ATP6AP1/Ac45 and ATP6AP2/PRR. In terms of tissue distribution, isoform long is highly expressed in osteoclastomas. Isoform short is highly expressed in thymus.

It is found in the membrane. In terms of biological role, subunit of the V0 complex of vacuolar(H+)-ATPase (V-ATPase), a multisubunit enzyme composed of a peripheral complex (V1) that hydrolyzes ATP and a membrane integral complex (V0) that translocates protons. V-ATPase is responsible for acidifying and maintaining the pH of intracellular compartments and in some cell types, is targeted to the plasma membrane, where it is responsible for acidifying the extracellular environment. Seems to be directly involved in T-cell activation. In Homo sapiens (Human), this protein is V-type proton ATPase 116 kDa subunit a 3 (TCIRG1).